Here is a 465-residue protein sequence, read N- to C-terminus: Cysteine--tRNA ligase (465 aa).

Position 27 (C27) interacts with Zn(2+). The 'HIGH' region signature appears at 29-39 (PTVYDDAHLGH). Positions 207, 237, and 241 each coordinate Zn(2+). Positions 269–273 (KMSKS) match the 'KMSKS' region motif. An ATP-binding site is contributed by K272.

This sequence belongs to the class-I aminoacyl-tRNA synthetase family. As to quaternary structure, monomer. Zn(2+) is required as a cofactor.

It localises to the cytoplasm. The enzyme catalyses tRNA(Cys) + L-cysteine + ATP = L-cysteinyl-tRNA(Cys) + AMP + diphosphate. This is Cysteine--tRNA ligase from Helicobacter pylori (strain Shi470).